The sequence spans 188 residues: Large ribosomal subunit protein bL9 (188 aa).

Basic and acidic residues predominate over residues 149-170 (RSEEEAERQARGEEIGVEKEEP). The disordered stretch occupies residues 149–188 (RSEEEAERQARGEEIGVEKEEPSGFVEEALEETVEAPAEA).

This sequence belongs to the bacterial ribosomal protein bL9 family.

Functionally, binds to the 23S rRNA. The protein is Large ribosomal subunit protein bL9 of Gluconacetobacter diazotrophicus (strain ATCC 49037 / DSM 5601 / CCUG 37298 / CIP 103539 / LMG 7603 / PAl5).